Consider the following 200-residue polypeptide: Recombination protein RecR (200 aa).

The C4-type zinc finger occupies 58-73 (CQKCHNISDTTLCSIC). One can recognise a Toprim domain in the interval 81-176 (GLICVVENIQ…KLSNIARGVA (96 aa)).

Belongs to the RecR family.

Its function is as follows. May play a role in DNA repair. It seems to be involved in an RecBC-independent recombinational process of DNA repair. It may act with RecF and RecO. The polypeptide is Recombination protein RecR (Amoebophilus asiaticus (strain 5a2)).